The primary structure comprises 307 residues: MAVQKYTVALFLAVALVAGPAASYAADAGYTPAAAATPATPAATPAAAGGKATTDEQKLLEDVNAGFKAAVAAAANAPPADKFKIFEAAFSESSKGLLATSAAKAPGLIPKLDTAYDVAYKAAEATPEAKYDAFVTALTEALRVIAGALEVHAVKPATEEVLAAKIPTGELQIVDKIDAAFKIAATAANAAPTNDKFTVFESAFNKALNECTGGAYETYKFIPSLEAAVKQAYAATVAAAPEVKYAVFEAALTKAITAMTQAQKAGKPAAAAATAAATVATAAATAAAVLPPPLLVVQSLISLLIYY.

A signal peptide spans 1 to 25 (MAVQKYTVALFLAVALVAGPAASYA).

It belongs to the Poa p IX/Phl p VI allergen family. In terms of tissue distribution, pollen, starch granules.

The chain is Major pollen allergen Lol p 5a (LOLPIB) from Lolium perenne (Perennial ryegrass).